The chain runs to 187 residues: Bifunctional protein PyrR (187 aa).

The PRPP-binding signature appears at 109–121; that stretch reads VILVDDVLYSGRS.

Belongs to the purine/pyrimidine phosphoribosyltransferase family. PyrR subfamily.

The catalysed reaction is UMP + diphosphate = 5-phospho-alpha-D-ribose 1-diphosphate + uracil. In terms of biological role, regulates the transcription of the pyrimidine nucleotide (pyr) operon in response to exogenous pyrimidines. Its function is as follows. Also displays a weak uracil phosphoribosyltransferase activity which is not physiologically significant. This is Bifunctional protein PyrR from Mycobacterium ulcerans (strain Agy99).